A 365-amino-acid polypeptide reads, in one-letter code: Serpentine receptor class epsilon-38 (365 aa).

7 consecutive transmembrane segments (helical) span residues 26 to 46 (GMYL…GVII), 65 to 85 (IMTA…LLII), 124 to 144 (ALVI…FGIL), 168 to 188 (IPVF…YFVL), 196 to 216 (LGTS…LAVW), 256 to 276 (LVIV…CLVI), and 285 to 305 (IFIH…CSTL).

It belongs to the nematode receptor-like protein sre family.

The protein localises to the membrane. This chain is Serpentine receptor class epsilon-38 (sre-38), found in Caenorhabditis elegans.